A 209-amino-acid polypeptide reads, in one-letter code: Ribosomal RNA large subunit methyltransferase E (209 aa).

Positions 63, 65, 83, 99, and 124 each coordinate S-adenosyl-L-methionine. Residue Lys164 is the Proton acceptor of the active site.

Belongs to the class I-like SAM-binding methyltransferase superfamily. RNA methyltransferase RlmE family.

It is found in the cytoplasm. The enzyme catalyses uridine(2552) in 23S rRNA + S-adenosyl-L-methionine = 2'-O-methyluridine(2552) in 23S rRNA + S-adenosyl-L-homocysteine + H(+). Specifically methylates the uridine in position 2552 of 23S rRNA at the 2'-O position of the ribose in the fully assembled 50S ribosomal subunit. In Vibrio parahaemolyticus serotype O3:K6 (strain RIMD 2210633), this protein is Ribosomal RNA large subunit methyltransferase E.